We begin with the raw amino-acid sequence, 90 residues long: MGIKLINIGFGNIVSANRLVAIVSPESAPIKRIIQEARDRGMLIDATYGRRTRAVIITDSDHVILSAVQPETVAHRLSTKDDMAVDEDDE.

This sequence belongs to the RemA family.

This chain is Putative regulatory protein Cbei_1140, found in Clostridium beijerinckii (strain ATCC 51743 / NCIMB 8052) (Clostridium acetobutylicum).